A 191-amino-acid polypeptide reads, in one-letter code: Xanthine phosphoribosyltransferase (191 aa).

Residues L20 and N27 each contribute to the xanthine site. 128-132 (ANGQA) contributes to the 5-phospho-alpha-D-ribose 1-diphosphate binding site. A xanthine-binding site is contributed by K156.

This sequence belongs to the purine/pyrimidine phosphoribosyltransferase family. Xpt subfamily. As to quaternary structure, homodimer.

The protein resides in the cytoplasm. The enzyme catalyses XMP + diphosphate = xanthine + 5-phospho-alpha-D-ribose 1-diphosphate. The protein operates within purine metabolism; XMP biosynthesis via salvage pathway; XMP from xanthine: step 1/1. In terms of biological role, converts the preformed base xanthine, a product of nucleic acid breakdown, to xanthosine 5'-monophosphate (XMP), so it can be reused for RNA or DNA synthesis. This is Xanthine phosphoribosyltransferase from Acinetobacter baumannii (strain AB307-0294).